Reading from the N-terminus, the 374-residue chain is Alanine racemase (374 aa).

Residue lysine 34 is the Proton acceptor; specific for D-alanine of the active site. Residue lysine 34 is modified to N6-(pyridoxal phosphate)lysine. Arginine 147 contacts substrate. Tyrosine 271 functions as the Proton acceptor; specific for L-alanine in the catalytic mechanism. Position 319 (methionine 319) interacts with substrate.

Belongs to the alanine racemase family. The cofactor is pyridoxal 5'-phosphate.

The enzyme catalyses L-alanine = D-alanine. It functions in the pathway amino-acid biosynthesis; D-alanine biosynthesis; D-alanine from L-alanine: step 1/1. Catalyzes the interconversion of L-alanine and D-alanine. May also act on other amino acids. The polypeptide is Alanine racemase (alr) (Actinobacillus pleuropneumoniae serotype 5b (strain L20)).